The chain runs to 273 residues: 4-hydroxy-tetrahydrodipicolinate reductase (273 aa).

NAD(+) contacts are provided by residues 12–17 (GAGGRM) and E38. Position 39 (R39) interacts with NADP(+). NAD(+)-binding positions include 102–104 (GTT) and 126–129 (AANF). The active-site Proton donor/acceptor is the H159. H160 lines the (S)-2,3,4,5-tetrahydrodipicolinate pocket. Residue K163 is the Proton donor of the active site. Position 169-170 (169-170 (GT)) interacts with (S)-2,3,4,5-tetrahydrodipicolinate.

It belongs to the DapB family. In terms of assembly, homotetramer.

Its subcellular location is the cytoplasm. The enzyme catalyses (S)-2,3,4,5-tetrahydrodipicolinate + NAD(+) + H2O = (2S,4S)-4-hydroxy-2,3,4,5-tetrahydrodipicolinate + NADH + H(+). It catalyses the reaction (S)-2,3,4,5-tetrahydrodipicolinate + NADP(+) + H2O = (2S,4S)-4-hydroxy-2,3,4,5-tetrahydrodipicolinate + NADPH + H(+). It functions in the pathway amino-acid biosynthesis; L-lysine biosynthesis via DAP pathway; (S)-tetrahydrodipicolinate from L-aspartate: step 4/4. In terms of biological role, catalyzes the conversion of 4-hydroxy-tetrahydrodipicolinate (HTPA) to tetrahydrodipicolinate. This is 4-hydroxy-tetrahydrodipicolinate reductase from Salmonella paratyphi A (strain ATCC 9150 / SARB42).